Here is a 91-residue protein sequence, read N- to C-terminus: MAIKKFSSLLLPLLMVLALVVLPIISGRTQEHPCQDYRLGCKSRDVCNAKCLSLGYVKGGDCVTFAFPICCCKINFGFQDDSPISSPIFTD.

Residues 1–27 form the signal peptide; the sequence is MAIKKFSSLLLPLLMVLALVVLPIISG. Cystine bridges form between cysteine 34/cysteine 72, cysteine 41/cysteine 62, cysteine 47/cysteine 70, and cysteine 51/cysteine 71.

Belongs to the DEFL family.

It is found in the secreted. The polypeptide is Defensin-like protein 82 (Arabidopsis thaliana (Mouse-ear cress)).